Here is a 163-residue protein sequence, read N- to C-terminus: Cytochrome c-type biogenesis protein CcmE (163 aa).

The Cytoplasmic segment spans residues 1–8; sequence MNPRRKKR. A helical; Signal-anchor for type II membrane protein transmembrane segment spans residues 9-29; sequence LTLAVALIVGVAGAASLLLYA. Over 30–163 the chain is Periplasmic; the sequence is LNSNLNLFYT…QEGVEKTAQY (134 aa). The heme site is built by histidine 131 and tyrosine 135.

This sequence belongs to the CcmE/CycJ family.

Its subcellular location is the cell inner membrane. Functionally, heme chaperone required for the biogenesis of c-type cytochromes. Transiently binds heme delivered by CcmC and transfers the heme to apo-cytochromes in a process facilitated by CcmF and CcmH. This chain is Cytochrome c-type biogenesis protein CcmE, found in Shewanella denitrificans (strain OS217 / ATCC BAA-1090 / DSM 15013).